We begin with the raw amino-acid sequence, 69 residues long: Putative membrane protein insertion efficiency factor (69 aa).

This sequence belongs to the UPF0161 family.

The protein resides in the cell membrane. Functionally, could be involved in insertion of integral membrane proteins into the membrane. This Clostridium kluyveri (strain NBRC 12016) protein is Putative membrane protein insertion efficiency factor.